The following is a 366-amino-acid chain: tRNA/tmRNA (uracil-C(5))-methyltransferase (366 aa).

S-adenosyl-L-methionine-binding residues include glutamine 190, tyrosine 218, asparagine 223, glutamate 239, and aspartate 299. Catalysis depends on cysteine 324, which acts as the Nucleophile. Catalysis depends on glutamate 358, which acts as the Proton acceptor.

The protein belongs to the class I-like SAM-binding methyltransferase superfamily. RNA M5U methyltransferase family. TrmA subfamily.

It carries out the reaction uridine(54) in tRNA + S-adenosyl-L-methionine = 5-methyluridine(54) in tRNA + S-adenosyl-L-homocysteine + H(+). The enzyme catalyses uridine(341) in tmRNA + S-adenosyl-L-methionine = 5-methyluridine(341) in tmRNA + S-adenosyl-L-homocysteine + H(+). Dual-specificity methyltransferase that catalyzes the formation of 5-methyluridine at position 54 (m5U54) in all tRNAs, and that of position 341 (m5U341) in tmRNA (transfer-mRNA). The protein is tRNA/tmRNA (uracil-C(5))-methyltransferase of Cronobacter sakazakii (strain ATCC BAA-894) (Enterobacter sakazakii).